The following is a 696-amino-acid chain: Golgi integral membrane protein 4 (696 aa).

Residue Gly-2 is the site of N-myristoyl glycine attachment. The Cytoplasmic segment spans residues 2–12 (GNGMCSRKQKR). The helical; Signal-anchor for type II membrane protein transmembrane segment at 13–33 (IFQTLLLLTVVFGFLYGAMLY) threads the bilayer. Topologically, residues 34-696 (YELQTQLRKA…AEKSHRRAEM (663 aa)) are lumenal. The stretch at 35–244 (ELQTQLRKAE…KQLKDTLNRI (210 aa)) forms a coiled coil. Positions 38–107 (TQLRKAEAVA…ETLNKGRQDS (70 aa)) are golgi targeting. An endosome targeting region spans residues 80 to 175 (LEHKKAKEDF…QELSKLKETV (96 aa)). 3 disordered regions span residues 122–145 (KSQHEELKKQHSDLEEEHRKQGED), 244–391 (IPSL…HARA), and 427–696 (LREH…RAEM). Basic and acidic residues predominate over residues 123 to 145 (SQHEELKKQHSDLEEEHRKQGED). The segment at 176–248 (YNLREENRQL…DTLNRIPSLR (73 aa)) is golgi targeting. Polar residues predominate over residues 254–269 (EQQNVTQVAHSPQGYN). Residue Asn-257 is glycosylated (N-linked (GlcNAc...) asparagine). Basic and acidic residues-rich tracts occupy residues 271 to 281 (AREKPTREVQE), 298 to 313 (RAEDTKLYAPTHKEAE), 324 to 343 (EVERREPEEHQVEEEHRKAL), 355 to 364 (EHLEEEHDPS), and 370 to 380 (REWKEQHEQRE). Ser-364 is subject to Phosphoserine. Residues 436–453 (QQRLQGHLLRQQEQQQQQ) show a composition bias toward low complexity. Composition is skewed to basic and acidic residues over residues 464–476 (AELEEGRPQHQEQ) and 505–545 (AYER…RAAV). Ser-538 is subject to Phosphoserine. Acidic residues predominate over residues 604–626 (QQEDNVDEQYQEEAEEEVQEDLT). Tyr-613 is modified (phosphotyrosine). The residue at position 626 (Thr-626) is a Phosphothreonine. 2 stretches are compositionally biased toward basic and acidic residues: residues 627–638 (EEKKRELEHNAE) and 661–672 (RDDNRPKGREEH). At Tyr-673 the chain carries Phosphotyrosine. The segment covering 673 to 683 (YEEEEEEEEDG) has biased composition (acidic residues).

Belongs to the GOLIM4 family. Phosphorylated probably by c-AMP-dependent kinases in its lumenal part. In terms of processing, O-glycosylated; modified by sialic acid residues. Post-translationally, N-glycosylated; N-glycans are probably of the complex type and modified by sialic acid residues.

It localises to the golgi apparatus. It is found in the golgi stack membrane. The protein localises to the endosome membrane. The protein resides in the membrane. Functionally, plays a role in endosome to Golgi protein trafficking; mediates protein transport along the late endosome-bypass pathway from the early endosome to the Golgi. This is Golgi integral membrane protein 4 (GOLIM4) from Homo sapiens (Human).